Here is a 118-residue protein sequence, read N- to C-terminus: Large ribosomal subunit protein uL22 (118 aa).

This sequence belongs to the universal ribosomal protein uL22 family. Part of the 50S ribosomal subunit.

Its function is as follows. This protein binds specifically to 23S rRNA; its binding is stimulated by other ribosomal proteins, e.g. L4, L17, and L20. It is important during the early stages of 50S assembly. It makes multiple contacts with different domains of the 23S rRNA in the assembled 50S subunit and ribosome. In terms of biological role, the globular domain of the protein is located near the polypeptide exit tunnel on the outside of the subunit, while an extended beta-hairpin is found that lines the wall of the exit tunnel in the center of the 70S ribosome. The chain is Large ribosomal subunit protein uL22 from Pediococcus pentosaceus (strain ATCC 25745 / CCUG 21536 / LMG 10740 / 183-1w).